Here is a 352-residue protein sequence, read N- to C-terminus: Decapping nuclease din1 (352 aa).

Residues arginine 33 and 93–95 (WRG) each bind substrate. Residue glutamate 150 participates in a divalent metal cation binding. Residues cysteine 182 and glutamate 199 each contribute to the substrate site. Residue aspartate 201 coordinates a divalent metal cation. Phosphoserine is present on serine 218. 2 residues coordinate a divalent metal cation: glutamate 239 and leucine 240. 2 residues coordinate substrate: lysine 241 and glutamine 263.

This sequence belongs to the DXO/Dom3Z family. Interacts with dhp1/Rat1; the interaction is direct, stabilizes dhp1 protein structure and stimulates its exoribonuclease activity. The interaction also stimulates din1 pyrophosphohydrolase activity, probably by recruiting it to mRNA substrates. Requires a divalent metal cation as cofactor.

It localises to the nucleus. The catalysed reaction is a 5'-end NAD(+)-phospho-ribonucleoside in mRNA + H2O = a 5'-end phospho-ribonucleoside in mRNA + NAD(+) + H(+). It carries out the reaction a 5'-end (N(7)-methyl 5'-triphosphoguanosine)-ribonucleoside-ribonucleotide in mRNA + H2O = a (N(7)-methyl 5'-triphosphoguanosine)-nucleoside + a 5'-end phospho-ribonucleoside in mRNA + H(+). The enzyme catalyses a 5'-end triphospho-ribonucleoside in mRNA + H2O = a 5'-end phospho-ribonucleoside in mRNA + diphosphate + H(+). Decapping enzyme for NAD-capped RNAs: specifically hydrolyzes the nicotinamide adenine dinucleotide (NAD) cap from a subset of RNAs by removing the entire NAD moiety from the 5'-end of an NAD-capped RNA. The NAD-cap is present at the 5'-end of some RNAs and snoRNAs. In contrast to the canonical 5'-end N7 methylguanosine (m7G) cap, the NAD cap promotes mRNA decay. Also acts as a non-canonical decapping enzyme that removes the entire cap structure of m7G capped or incompletely capped RNAs and mediates their subsequent degradation. Specifically degrades pre-mRNAs with a defective m7G cap and is part of a pre-mRNA capping quality control. Has decapping activity toward incomplete 5'-end m7G cap mRNAs such as unmethylated 5'-end-capped RNA (cap0), while it has no activity toward 2'-O-ribose methylated m7G cap (cap1). Also possesses RNA 5'-pyrophosphohydrolase activity by hydrolyzing the 5'-end triphosphate to release pyrophosphates. Stimulates exoribonuclease activity of dhp1, allowing it to degrade RNAs with stable secondary structure more effectively. This chain is Decapping nuclease din1, found in Schizosaccharomyces pombe (strain 972 / ATCC 24843) (Fission yeast).